The following is a 579-amino-acid chain: Folliculin (579 aa).

The tract at residues 32-82 (GAGSGDGAGRGEPADEEEGGIQMSSRIRAHSPAEGASAESSSPGPKKSDMC) is disordered. A phosphoserine mark is found at serine 62 and serine 73. Positions 63-76 (PAEGASAESSSPGP) are enriched in low complexity. Positions 86–242 (RSLAAGHPGY…RNGNAARSLT (157 aa)) constitute a uDENN FLCN/SMCR8-type domain. The stretch at 285–309 (QMEQLAELEEESESWDNSEAEEEEK) forms a coiled coil. Residues 294 to 308 (EESESWDNSEAEEEE) show a composition bias toward acidic residues. The tract at residues 294 to 321 (EESESWDNSEAEEEEKGPALPEGAEGRE) is disordered. Phosphoserine is present on residues serine 302, serine 406, serine 537, serine 542, and serine 571. The region spanning 339-491 (QPRKLSVFKS…ILNKMEAALT (153 aa)) is the cDENN FLCN/SMCR8-type domain. The region spanning 493–558 (QNLSVDVVDQ…LLKFWMTGLS (66 aa)) is the dDENN FLCN/SMCR8-type domain.

This sequence belongs to the folliculin family. As to quaternary structure, interacts (via C-terminus) with FNIP1 or FNIP2 (via C-terminus). Component of the lysosomal folliculin complex (LFC), composed of FLCN, FNIP1 (or FNIP2), RagA/RRAGA or RagB/RRAGB GDP-bound, RagC/RRAGC or RagD/RRAGD GTP-bound, and Ragulator. Interaction with FNIP1 or FNIP2 mediates indirect interaction with the PRKAA1, PRKAB1 and PRKAG1 subunits of 5'-AMP-activated protein kinase (AMPK). Interacts with HSP90AA1 in the presence of FNIP1. Interacts with HSP70, STUB1, CDC37, AHSA1, CCT2, STIP1, PTGES3 and PPP5C. Interacts with GABARAP; interaction takes place in the presence of FNIP1 and/or FNIP2. Interacts with RILP; the interaction is direct and promotes association between RILP and RAB34. Interacts with KIF3A and KIF3B. Interacts with lactate dehydrogenase LDHA, but not LDHB; the interaction is direct, may preferentially bind LDHA dimers rather than tetramers, and regulates LDHA activity, acting as an uncompetitive inhibitor. Phosphorylation by ULK1 modulates the interaction with GABARAP and is required to regulate autophagy.

Its subcellular location is the lysosome membrane. The protein resides in the cytoplasm. It is found in the cytosol. The protein localises to the cell projection. It localises to the cilium. Its subcellular location is the cytoskeleton. The protein resides in the microtubule organizing center. It is found in the centrosome. The protein localises to the spindle. It localises to the nucleus. With respect to regulation, GTPase-activating activity is inhibited in the folliculin complex (LFC), which stabilizes the GDP-bound state of RagA/RRAGA (or RagB/RRAGB), because Arg-164 is located far from the RagC/RRAGC or RagD/RRAGD nucleotide pocket. Disassembly of the LFC complex upon amino acid restimulation liberates the GTPase-activating activity. Multi-functional protein, involved in both the cellular response to amino acid availability and in the regulation of glycolysis. GTPase-activating protein that plays a key role in the cellular response to amino acid availability through regulation of the non-canonical mTORC1 signaling cascade controlling the MiT/TFE factors TFEB and TFE3. Activates mTORC1 by acting as a GTPase-activating protein: specifically stimulates GTP hydrolysis by RagC/RRAGC or RagD/RRAGD, promoting the conversion to the GDP-bound state of RagC/RRAGC or RagD/RRAGD, and thereby activating the kinase activity of mTORC1. The GTPase-activating activity is inhibited during starvation and activated in presence of nutrients. Acts as a key component for non-canonical mTORC1-dependent control of the MiT/TFE factors TFEB and TFE3, while it is not involved in mTORC1-dependent phosphorylation of canonical RPS6KB1/S6K1 and EIF4EBP1/4E-BP1. In low-amino acid conditions, the lysosomal folliculin complex (LFC) is formed on the membrane of lysosomes, which inhibits the GTPase-activating activity of FLCN, inactivates mTORC1 and maximizes nuclear translocation of TFEB and TFE3. Upon amino acid restimulation, RagA/RRAGA (or RagB/RRAGB) nucleotide exchange promotes disassembly of the LFC complex and liberates the GTPase-activating activity of FLCN, leading to activation of mTORC1 and subsequent cytoplasmic retention of TFEB and TFE3. Indirectly acts as a positive regulator of Wnt signaling by promoting mTOR-dependent cytoplasmic retention of MiT/TFE factor TFE3. Required for the exit of hematopoietic stem cell from pluripotency by promoting mTOR-dependent cytoplasmic retention of TFE3, thereby increasing Wnt signaling. Involved in the control of embryonic stem cells differentiation; together with LAMTOR1 it is necessary to recruit and activate RagC/RRAGC and RagD/RRAGD at the lysosomes, and to induce exit of embryonic stem cells from pluripotency via non-canonical, mTOR-independent TFE3 inactivation. Acts as an inhibitor of browning of adipose tissue by regulating mTOR-dependent cytoplasmic retention of TFE3. In response to flow stress, regulates STK11/LKB1 accumulation and mTORC1 activation through primary cilia: may act by recruiting STK11/LKB1 to primary cilia for activation of AMPK resided at basal bodies, causing mTORC1 down-regulation. Together with FNIP1 and/or FNIP2, regulates autophagy: following phosphorylation by ULK1, interacts with GABARAP and promotes autophagy. Required for starvation-induced perinuclear clustering of lysosomes by promoting association of RILP with its effector RAB34. Regulates glycolysis by binding to lactate dehydrogenase LDHA, acting as an uncompetitive inhibitor. The protein is Folliculin of Bos taurus (Bovine).